The following is a 158-amino-acid chain: Transcription elongation factor GreA (158 aa).

The stretch at T3–A75 forms a coiled coil.

The protein belongs to the GreA/GreB family.

In terms of biological role, necessary for efficient RNA polymerase transcription elongation past template-encoded arresting sites. The arresting sites in DNA have the property of trapping a certain fraction of elongating RNA polymerases that pass through, resulting in locked ternary complexes. Cleavage of the nascent transcript by cleavage factors such as GreA or GreB allows the resumption of elongation from the new 3'terminus. GreA releases sequences of 2 to 3 nucleotides. The protein is Transcription elongation factor GreA of Bacillus cereus (strain ATCC 14579 / DSM 31 / CCUG 7414 / JCM 2152 / NBRC 15305 / NCIMB 9373 / NCTC 2599 / NRRL B-3711).